A 480-amino-acid polypeptide reads, in one-letter code: Aspartyl/glutamyl-tRNA(Asn/Gln) amidotransferase subunit B (480 aa).

Belongs to the GatB/GatE family. GatB subfamily. In terms of assembly, heterotrimer of A, B and C subunits.

It carries out the reaction L-glutamyl-tRNA(Gln) + L-glutamine + ATP + H2O = L-glutaminyl-tRNA(Gln) + L-glutamate + ADP + phosphate + H(+). The catalysed reaction is L-aspartyl-tRNA(Asn) + L-glutamine + ATP + H2O = L-asparaginyl-tRNA(Asn) + L-glutamate + ADP + phosphate + 2 H(+). In terms of biological role, allows the formation of correctly charged Asn-tRNA(Asn) or Gln-tRNA(Gln) through the transamidation of misacylated Asp-tRNA(Asn) or Glu-tRNA(Gln) in organisms which lack either or both of asparaginyl-tRNA or glutaminyl-tRNA synthetases. The reaction takes place in the presence of glutamine and ATP through an activated phospho-Asp-tRNA(Asn) or phospho-Glu-tRNA(Gln). The chain is Aspartyl/glutamyl-tRNA(Asn/Gln) amidotransferase subunit B from Streptococcus pneumoniae (strain P1031).